The sequence spans 422 residues: Serine hydroxymethyltransferase (422 aa).

Residues Leu-121 and 125 to 127 each bind (6S)-5,6,7,8-tetrahydrofolate; that span reads GHL. Residue Lys-230 is modified to N6-(pyridoxal phosphate)lysine. Residue 355–357 coordinates (6S)-5,6,7,8-tetrahydrofolate; it reads SPF.

It belongs to the SHMT family. In terms of assembly, homodimer. Requires pyridoxal 5'-phosphate as cofactor.

The protein resides in the cytoplasm. The catalysed reaction is (6R)-5,10-methylene-5,6,7,8-tetrahydrofolate + glycine + H2O = (6S)-5,6,7,8-tetrahydrofolate + L-serine. It participates in one-carbon metabolism; tetrahydrofolate interconversion. Its pathway is amino-acid biosynthesis; glycine biosynthesis; glycine from L-serine: step 1/1. Functionally, catalyzes the reversible interconversion of serine and glycine with tetrahydrofolate (THF) serving as the one-carbon carrier. This reaction serves as the major source of one-carbon groups required for the biosynthesis of purines, thymidylate, methionine, and other important biomolecules. Also exhibits THF-independent aldolase activity toward beta-hydroxyamino acids, producing glycine and aldehydes, via a retro-aldol mechanism. The protein is Serine hydroxymethyltransferase of Teredinibacter turnerae (strain ATCC 39867 / T7901).